The following is a 132-amino-acid chain: Small ribosomal subunit protein uS8 (132 aa).

Belongs to the universal ribosomal protein uS8 family. Part of the 30S ribosomal subunit. Contacts proteins S5 and S12.

One of the primary rRNA binding proteins, it binds directly to 16S rRNA central domain where it helps coordinate assembly of the platform of the 30S subunit. This Alkaliphilus metalliredigens (strain QYMF) protein is Small ribosomal subunit protein uS8.